We begin with the raw amino-acid sequence, 116 residues long: uncharacterized protein (116 aa).

This is an uncharacterized protein from Acheta domesticus (House cricket).